The sequence spans 225 residues: 2-phytyl-1,4-naphtoquinone methyltransferase (225 aa).

It belongs to the class I-like SAM-binding methyltransferase superfamily. MenG/UbiE family.

The enzyme catalyses demethylphylloquinol + S-adenosyl-L-methionine = phylloquinol + S-adenosyl-L-homocysteine + H(+). Its pathway is cofactor biosynthesis; phylloquinone biosynthesis. In terms of biological role, methyltransferase required for the conversion of 2-phytyl-1,4-beta-naphthoquinol to phylloquinol. The chain is 2-phytyl-1,4-naphtoquinone methyltransferase from Thermosynechococcus vestitus (strain NIES-2133 / IAM M-273 / BP-1).